Here is a 387-residue protein sequence, read N- to C-terminus: Acetate kinase (387 aa).

Residue N14 coordinates Mg(2+). Residue K21 coordinates ATP. R80 serves as a coordination point for substrate. Residue D137 is the Proton donor/acceptor of the active site. Residues 197–201, 271–273, and 319–323 contribute to the ATP site; these read HLGNG, DFR, and GIGEN. E373 serves as a coordination point for Mg(2+).

It belongs to the acetokinase family. Homodimer. It depends on Mg(2+) as a cofactor. Mn(2+) serves as cofactor.

The protein resides in the cytoplasm. It carries out the reaction acetate + ATP = acetyl phosphate + ADP. Its pathway is metabolic intermediate biosynthesis; acetyl-CoA biosynthesis; acetyl-CoA from acetate: step 1/2. Catalyzes the formation of acetyl phosphate from acetate and ATP. Can also catalyze the reverse reaction. In Mycobacterium avium (strain 104), this protein is Acetate kinase.